Consider the following 445-residue polypeptide: C4-dicarboxylate transport protein (445 aa).

8 consecutive transmembrane segments (helical) span residues 24–44, 62–82, 105–125, 163–183, 201–221, 237–257, 322–342, and 370–390; these read VLYV…WVSP, LIKM…IAHI, FALI…GLAA, GDIL…MALG, FGVI…AMAF, LVAL…GLIA, IYMT…LTFT, and AGTL…VFSI.

Belongs to the dicarboxylate/amino acid:cation symporter (DAACS) (TC 2.A.23) family.

It is found in the cell inner membrane. Responsible for the transport of dicarboxylates such as succinate, fumarate, and malate from the periplasm across the membrane. The polypeptide is C4-dicarboxylate transport protein (Rhodopseudomonas palustris (strain BisB5)).